The primary structure comprises 263 residues: Taurine import ATP-binding protein TauB (263 aa).

In terms of domain architecture, ABC transporter spans 4 to 235; it reads LTAEAISLSF…RYAAGETVRS (232 aa). Residue 40–47 coordinates ATP; it reads GPSGCGKS.

It belongs to the ABC transporter superfamily. Taurine importer (TC 3.A.1.17.1) family. The complex is composed of two ATP-binding proteins (TauB), two transmembrane proteins (TauC) and a solute-binding protein (TauA).

The protein localises to the cell inner membrane. The enzyme catalyses taurine(out) + ATP + H2O = taurine(in) + ADP + phosphate + H(+). Its function is as follows. Part of the ABC transporter complex TauABC involved in taurine import. Responsible for energy coupling to the transport system. This is Taurine import ATP-binding protein TauB from Pseudomonas aeruginosa (strain ATCC 15692 / DSM 22644 / CIP 104116 / JCM 14847 / LMG 12228 / 1C / PRS 101 / PAO1).